The following is a 138-amino-acid chain: Secreted RxLR effector protein 91 (138 aa).

A signal peptide spans 1–18 (MVIPHIICLPMALHLWTC). Positions 34-37 (RRLR) match the RxLR motif. Asn-93 carries an N-linked (GlcNAc...) asparagine glycan.

It belongs to the RxLR effector family.

It localises to the secreted. The protein resides in the host nucleus. Its function is as follows. Secreted effector that completely suppresses the host cell death induced by cell death-inducing proteins. This is Secreted RxLR effector protein 91 from Plasmopara viticola (Downy mildew of grapevine).